The primary structure comprises 51 residues: Large ribosomal subunit protein eL39 (51 aa).

The segment covering 1 to 19 (MSHNMKGQKKRLAKAHKQN) has biased composition (basic residues). A disordered region spans residues 1 to 23 (MSHNMKGQKKRLAKAHKQNSRVP).

This sequence belongs to the eukaryotic ribosomal protein eL39 family.

The sequence is that of Large ribosomal subunit protein eL39 from Methanosarcina mazei (strain ATCC BAA-159 / DSM 3647 / Goe1 / Go1 / JCM 11833 / OCM 88) (Methanosarcina frisia).